The primary structure comprises 331 residues: L-lactate dehydrogenase A chain (331 aa).

NAD(+)-binding positions include 29–57 and Arg98; that span reads GMVGMASAISILLKDLCDELAMVDVMEDK. 3 residues coordinate substrate: Arg105, Asn137, and Arg168. NAD(+) is bound at residue Asn137. His192 functions as the Proton acceptor in the catalytic mechanism. Thr247 contacts substrate.

The protein belongs to the LDH/MDH superfamily. LDH family. Homotetramer.

It localises to the cytoplasm. It carries out the reaction (S)-lactate + NAD(+) = pyruvate + NADH + H(+). The protein operates within fermentation; pyruvate fermentation to lactate; (S)-lactate from pyruvate: step 1/1. Interconverts simultaneously and stereospecifically pyruvate and lactate with concomitant interconversion of NADH and NAD(+). The sequence is that of L-lactate dehydrogenase A chain (ldha) from Dissostichus mawsoni (Antarctic cod).